Consider the following 327-residue polypeptide: Tryptophan--tRNA ligase (327 aa).

Residues 9–11 and 17–18 contribute to the ATP site; these read QPS and GN. Positions 10-18 match the 'HIGH' region motif; sequence PSGTLTLGN. D132 lines the L-tryptophan pocket. Residues 144–146, I183, and 192–196 contribute to the ATP site; these read GDD and KMSKS. The 'KMSKS' region motif lies at 192 to 196; that stretch reads KMSKS.

It belongs to the class-I aminoacyl-tRNA synthetase family. Homodimer.

Its subcellular location is the cytoplasm. The enzyme catalyses tRNA(Trp) + L-tryptophan + ATP = L-tryptophyl-tRNA(Trp) + AMP + diphosphate + H(+). In terms of biological role, catalyzes the attachment of tryptophan to tRNA(Trp). The sequence is that of Tryptophan--tRNA ligase from Oceanobacillus iheyensis (strain DSM 14371 / CIP 107618 / JCM 11309 / KCTC 3954 / HTE831).